We begin with the raw amino-acid sequence, 568 residues long: Protein NDNF (568 aa).

Positions 1 to 19 (MVLLHWCLLWLLFPLSSRT) are cleaved as a signal peptide. 2 consecutive Fibronectin type-III domains span residues 261–331 (NSGK…VGTF) and 445–564 (PSLP…VVKT). Asparagine 322 carries an N-linked (GlcNAc...) asparagine glycan.

In terms of assembly, binds heparin and chondroitin sulfate. O-glycosylated; contains heparan sulfate and chondroitin sulfate. Post-translationally, N-glycosylated. Expressed in neurons along the gonadotropin-releasing hormone (GnRH) expressing neurons migratory route.

The protein localises to the secreted. Secretory protein that plays a role in various cellular processes. Acts as a chemorepellent acting on gonadotropin-releasing hormone (GnRH) expressing neurons regulating their migration to the hypothalamus. Also promotes neuron migration, growth and survival as well as neurite outgrowth and is involved in the development of the olfactory system. May also act through the regulation of growth factors activity and downstream signaling. Also regulates extracellular matrix assembly and cell adhesiveness. Promotes endothelial cell survival, vessel formation and plays an important role in the process of revascularization through NOS3-dependent mechanisms. The chain is Protein NDNF (NDNF) from Homo sapiens (Human).